Consider the following 151-residue polypeptide: Ribosome maturation factor RimP (151 aa).

The protein belongs to the RimP family.

Its subcellular location is the cytoplasm. Functionally, required for maturation of 30S ribosomal subunits. This is Ribosome maturation factor RimP from Pseudoalteromonas translucida (strain TAC 125).